Reading from the N-terminus, the 1403-residue chain is E3 ubiquitin-protein ligase SNT2 (1403 aa).

Residues 40-62 (SGAKTKGSNSQTPRNCKRTSNPA) form a disordered region. A compositionally biased stretch (polar residues) spans 45-62 (KGSNSQTPRNCKRTSNPA). One can recognise a BAH domain in the interval 121–258 (VLLSANDTIY…RYTLKYYKVY (138 aa)). Residues 317 to 369 (DKRCQFCKEWCIQKESLSCDECGVCAHLYCMDPPLDRKPNKDVVWTCFSCLQK) form a PHD-type 1 zinc finger. The region spanning 555–606 (LKEPSFTAVEIRKFEEAVEKFGSELRPVCEYVGTQPMSMIVRFYYNWKKTER) is the SANT domain. The segment at 1038–1097 (RTFCSVCKEKFNDNDNYEVVCGNCGLTVHYFCYAIKLPKDMKKNTNLKTFKWLCDPCSND) adopts a PHD-type 2 zinc-finger fold. The RING-type; degenerate zinc finger occupies 1041-1095 (CSVCKEKFNDNDNYEVVCGNCGLTVHYFCYAIKLPKDMKKNTNLKTFKWLCDPCS). A C2HC pre-PHD-type zinc finger spans residues 1105 to 1153 (TYQCSMCPTKDYDYDRYRSQSFKICPDALKCTSLGTWVHLVCSLFNEDI). The segment at 1177–1231 (FTCGVCRINGGGLVKCNKCQYRYHITCAQNSSNFKLMFEKKNMSVDTTLPCIKDV) adopts a PHD-type 3; degenerate zinc-finger fold.

In terms of assembly, component of the Snt2C complex composed of SNT2, ECM5 and RPD3. Interacts with the E2 ubiquitin-conjugating enzyme UBC4 and histones H3 and H4. Binding is enhanced to methylated histone H3K36me3.

Its subcellular location is the cytoplasm. The protein localises to the nucleus. It catalyses the reaction S-ubiquitinyl-[E2 ubiquitin-conjugating enzyme]-L-cysteine + [acceptor protein]-L-lysine = [E2 ubiquitin-conjugating enzyme]-L-cysteine + N(6)-ubiquitinyl-[acceptor protein]-L-lysine.. In terms of biological role, transcriptional regulator that, together with ECM5, recruits histone deacetylase RPD3 to a small number of promoters of stress-response genes in response to oxidative stress. Probable ubiquitin-protein ligase involved in the degradation-related ubiquitination of histones. Contributes to the post-translational regulation of histone protein levels by polyubiquitination of excess histones for subsequent degradation. This chain is E3 ubiquitin-protein ligase SNT2, found in Saccharomyces cerevisiae (strain ATCC 204508 / S288c) (Baker's yeast).